Reading from the N-terminus, the 216-residue chain is 3-isopropylmalate dehydratase small subunit (216 aa).

It belongs to the LeuD family. LeuD type 1 subfamily. As to quaternary structure, heterodimer of LeuC and LeuD.

It catalyses the reaction (2R,3S)-3-isopropylmalate = (2S)-2-isopropylmalate. The protein operates within amino-acid biosynthesis; L-leucine biosynthesis; L-leucine from 3-methyl-2-oxobutanoate: step 2/4. Its function is as follows. Catalyzes the isomerization between 2-isopropylmalate and 3-isopropylmalate, via the formation of 2-isopropylmaleate. This chain is 3-isopropylmalate dehydratase small subunit, found in Albidiferax ferrireducens (strain ATCC BAA-621 / DSM 15236 / T118) (Rhodoferax ferrireducens).